A 289-amino-acid polypeptide reads, in one-letter code: 4-hydroxybenzoate octaprenyltransferase (289 aa).

A run of 9 helical transmembrane segments spans residues 22-42 (AGWL…SHGF), 45-65 (WHLV…GCCI), 96-116 (LGLG…TNAV), 118-138 (IAWS…KRYV), 140-160 (MPQA…FAAV), 164-184 (VPPL…AYDT), 211-231 (VAGV…ALIQ), 236-256 (AIFM…GWLI), and 267-287 (AFRL…LSYW).

Belongs to the UbiA prenyltransferase family. Requires Mg(2+) as cofactor.

The protein resides in the cell inner membrane. It carries out the reaction all-trans-octaprenyl diphosphate + 4-hydroxybenzoate = 4-hydroxy-3-(all-trans-octaprenyl)benzoate + diphosphate. It participates in cofactor biosynthesis; ubiquinone biosynthesis. Catalyzes the prenylation of para-hydroxybenzoate (PHB) with an all-trans polyprenyl group. Mediates the second step in the final reaction sequence of ubiquinone-8 (UQ-8) biosynthesis, which is the condensation of the polyisoprenoid side chain with PHB, generating the first membrane-bound Q intermediate 3-octaprenyl-4-hydroxybenzoate. The polypeptide is 4-hydroxybenzoate octaprenyltransferase (Polaromonas naphthalenivorans (strain CJ2)).